Here is a 666-residue protein sequence, read N- to C-terminus: LEAF RUST 10 DISEASE-RESISTANCE LOCUS RECEPTOR-LIKE PROTEIN KINASE-like 2.5 (666 aa).

The N-terminal stretch at 1-30 is a signal peptide; sequence MINFSLSLTKSMSYSFIWMLFVIHISCVLS. Residues 31–275 are Extracellular-facing; the sequence is ADGNHILCSP…PTRNKVILKL (245 aa). Asn-119, Asn-141, Asn-171, and Asn-198 each carry an N-linked (GlcNAc...) asparagine glycan. Residues 276–296 traverse the membrane as a helical segment; that stretch reads FFIVIYVLGIGAASFAMMGVI. Residues 297-666 lie on the Cytoplasmic side of the membrane; it reads LVVTCLNCLI…YTEICSINVA (370 aa). A Protein kinase domain is found at 348–636; it reads KSFAEVIGKG…ALEVPPRPVL (289 aa). ATP is bound by residues 354–362 and Lys-376; that span reads IGKGGFGTV. At Tyr-420 the chain carries Phosphotyrosine. Asp-471 functions as the Proton acceptor in the catalytic mechanism. 2 positions are modified to phosphothreonine: Thr-508 and Thr-511.

Belongs to the protein kinase superfamily. Ser/Thr protein kinase family.

The protein localises to the membrane. It catalyses the reaction L-seryl-[protein] + ATP = O-phospho-L-seryl-[protein] + ADP + H(+). The enzyme catalyses L-threonyl-[protein] + ATP = O-phospho-L-threonyl-[protein] + ADP + H(+). This Arabidopsis thaliana (Mouse-ear cress) protein is LEAF RUST 10 DISEASE-RESISTANCE LOCUS RECEPTOR-LIKE PROTEIN KINASE-like 2.5.